A 59-amino-acid polypeptide reads, in one-letter code: Large ribosomal subunit protein bL32 (59 aa).

The segment covering 1 to 16 (MAVPKRKTSPSKRGMR) has biased composition (basic residues). The disordered stretch occupies residues 1 to 20 (MAVPKRKTSPSKRGMRRSHD).

Belongs to the bacterial ribosomal protein bL32 family.

The sequence is that of Large ribosomal subunit protein bL32 from Sphingopyxis alaskensis (strain DSM 13593 / LMG 18877 / RB2256) (Sphingomonas alaskensis).